Reading from the N-terminus, the 428-residue chain is MSIIEEARRGIITDEIKSISKLEKVSPEKVRKRIAEGKIMLLRNVKRPSKKLVPIGKGLTTKININIGTSSEVIDLDMELEKVKISNKWGDTLMDLSTGGDIDEIRRKIIDKSDLPVGTVPVYQAFIQSFKKKSGGAYFSEDELLSIVERQLKDGVAFMTIHAGLTRELAIRALKSDRVIPIVSRGGDMIAGWMIHNGKENPYRTNWKYLLELFKEYDATISLGDALRPGATADAHDEFQIGELIETARLVKDAINNGVQVMVEGPGHVPLNEVAWDVKLMKKLTGGVPYYVLGPLVIDVGAPYDHIASSIGAAIASAAGADLLCYLTPAEHLSLPNAKQVEEGAIAYRIAAHAGDIVKLGKKVRKWDDEVSYYRGKLEWDKMIEKLIDPEQAYKVYTQFGEPNVKACTMCGGYCPMMWAMEQVKKIG.

Substrate-binding positions include Asn-66, Met-94, Tyr-123, His-162, 184-186, 225-228, and Glu-264; these read SRG and DALR. Residue His-268 coordinates Zn(2+). Residue Tyr-291 participates in substrate binding. Zn(2+) is bound at residue His-332. 3 residues coordinate [4Fe-4S] cluster: Cys-408, Cys-411, and Cys-415.

The protein belongs to the ThiC family. [4Fe-4S] cluster serves as cofactor.

It catalyses the reaction 5-amino-1-(5-phospho-beta-D-ribosyl)imidazole + S-adenosyl-L-methionine = 4-amino-2-methyl-5-(phosphooxymethyl)pyrimidine + CO + 5'-deoxyadenosine + formate + L-methionine + 3 H(+). It functions in the pathway cofactor biosynthesis; thiamine diphosphate biosynthesis. Its function is as follows. Catalyzes the synthesis of the hydroxymethylpyrimidine phosphate (HMP-P) moiety of thiamine from aminoimidazole ribotide (AIR) in a radical S-adenosyl-L-methionine (SAM)-dependent reaction. In Sulfolobus acidocaldarius (strain ATCC 33909 / DSM 639 / JCM 8929 / NBRC 15157 / NCIMB 11770), this protein is Phosphomethylpyrimidine synthase.